The following is a 135-amino-acid chain: Small ribosomal subunit protein uS12 (135 aa).

The residue at position 89 (Asp89) is a 3-methylthioaspartic acid. Positions 108 to 135 (NKRTVSRSKYGTKKAKATDKKATDNKKK) are disordered. A compositionally biased stretch (basic residues) spans 111–122 (TVSRSKYGTKKA). Basic and acidic residues predominate over residues 123–135 (KATDKKATDNKKK).

Belongs to the universal ribosomal protein uS12 family. As to quaternary structure, part of the 30S ribosomal subunit. Contacts proteins S8 and S17. May interact with IF1 in the 30S initiation complex.

With S4 and S5 plays an important role in translational accuracy. In terms of biological role, interacts with and stabilizes bases of the 16S rRNA that are involved in tRNA selection in the A site and with the mRNA backbone. Located at the interface of the 30S and 50S subunits, it traverses the body of the 30S subunit contacting proteins on the other side and probably holding the rRNA structure together. The combined cluster of proteins S8, S12 and S17 appears to hold together the shoulder and platform of the 30S subunit. The chain is Small ribosomal subunit protein uS12 from Helicobacter pylori (strain P12).